The sequence spans 403 residues: 4-hydroxy-3-methylbut-2-enyl diphosphate reductase (403 aa).

[4Fe-4S] cluster is bound at residue cysteine 66. Histidine 96 is a binding site for (2E)-4-hydroxy-3-methylbut-2-enyl diphosphate. Histidine 96 lines the dimethylallyl diphosphate pocket. Histidine 96 is an isopentenyl diphosphate binding site. Cysteine 157 contacts [4Fe-4S] cluster. Residue histidine 185 participates in (2E)-4-hydroxy-3-methylbut-2-enyl diphosphate binding. Position 185 (histidine 185) interacts with dimethylallyl diphosphate. Histidine 185 contacts isopentenyl diphosphate. Glutamate 187 acts as the Proton donor in catalysis. Residue threonine 250 coordinates (2E)-4-hydroxy-3-methylbut-2-enyl diphosphate. Cysteine 288 is a [4Fe-4S] cluster binding site. (2E)-4-hydroxy-3-methylbut-2-enyl diphosphate contacts are provided by serine 317, serine 318, asparagine 319, and serine 379. 4 residues coordinate dimethylallyl diphosphate: serine 317, serine 318, asparagine 319, and serine 379. Residues serine 317, serine 318, asparagine 319, and serine 379 each coordinate isopentenyl diphosphate.

This sequence belongs to the IspH family. The cofactor is [4Fe-4S] cluster.

It carries out the reaction isopentenyl diphosphate + 2 oxidized [2Fe-2S]-[ferredoxin] + H2O = (2E)-4-hydroxy-3-methylbut-2-enyl diphosphate + 2 reduced [2Fe-2S]-[ferredoxin] + 2 H(+). It catalyses the reaction dimethylallyl diphosphate + 2 oxidized [2Fe-2S]-[ferredoxin] + H2O = (2E)-4-hydroxy-3-methylbut-2-enyl diphosphate + 2 reduced [2Fe-2S]-[ferredoxin] + 2 H(+). It participates in isoprenoid biosynthesis; dimethylallyl diphosphate biosynthesis; dimethylallyl diphosphate from (2E)-4-hydroxy-3-methylbutenyl diphosphate: step 1/1. The protein operates within isoprenoid biosynthesis; isopentenyl diphosphate biosynthesis via DXP pathway; isopentenyl diphosphate from 1-deoxy-D-xylulose 5-phosphate: step 6/6. Its function is as follows. Catalyzes the conversion of 1-hydroxy-2-methyl-2-(E)-butenyl 4-diphosphate (HMBPP) into a mixture of isopentenyl diphosphate (IPP) and dimethylallyl diphosphate (DMAPP). Acts in the terminal step of the DOXP/MEP pathway for isoprenoid precursor biosynthesis. The polypeptide is 4-hydroxy-3-methylbut-2-enyl diphosphate reductase (Rippkaea orientalis (strain PCC 8801 / RF-1) (Cyanothece sp. (strain PCC 8801))).